A 592-amino-acid chain; its full sequence is V-type ATP synthase alpha chain 2 (592 aa).

Residue 237 to 244 (GGFGTGKT) coordinates ATP.

It belongs to the ATPase alpha/beta chains family.

It catalyses the reaction ATP + H2O + 4 H(+)(in) = ADP + phosphate + 5 H(+)(out). Produces ATP from ADP in the presence of a proton gradient across the membrane. The V-type alpha chain is a catalytic subunit. This chain is V-type ATP synthase alpha chain 2, found in Clostridium tetani (strain Massachusetts / E88).